Here is a 181-residue protein sequence, read N- to C-terminus: ATP synthase subunit delta (181 aa).

It belongs to the ATPase delta chain family. F-type ATPases have 2 components, F(1) - the catalytic core - and F(0) - the membrane proton channel. F(1) has five subunits: alpha(3), beta(3), gamma(1), delta(1), epsilon(1). F(0) has three main subunits: a(1), b(2) and c(10-14). The alpha and beta chains form an alternating ring which encloses part of the gamma chain. F(1) is attached to F(0) by a central stalk formed by the gamma and epsilon chains, while a peripheral stalk is formed by the delta and b chains.

It localises to the cell inner membrane. F(1)F(0) ATP synthase produces ATP from ADP in the presence of a proton or sodium gradient. F-type ATPases consist of two structural domains, F(1) containing the extramembraneous catalytic core and F(0) containing the membrane proton channel, linked together by a central stalk and a peripheral stalk. During catalysis, ATP synthesis in the catalytic domain of F(1) is coupled via a rotary mechanism of the central stalk subunits to proton translocation. In terms of biological role, this protein is part of the stalk that links CF(0) to CF(1). It either transmits conformational changes from CF(0) to CF(1) or is implicated in proton conduction. This Chlorobium limicola (strain DSM 245 / NBRC 103803 / 6330) protein is ATP synthase subunit delta.